The following is a 97-amino-acid chain: MPAKESPFRVNLKILPSAQRNELTGYENGLLKIKIAAQPEKGKANKALVDYLSELLDTPKSEIEICRGLSGRNKVVAFYSLSQADFEAKISAILRGS.

The protein belongs to the UPF0235 family.

The protein is UPF0235 protein DET1292 of Dehalococcoides mccartyi (strain ATCC BAA-2266 / KCTC 15142 / 195) (Dehalococcoides ethenogenes (strain 195)).